The chain runs to 495 residues: Protein YhjJ (495 aa).

The signal sequence occupies residues 1-24 (MQGTKIRLLAGSLLMLASAGYVQA).

This sequence belongs to the peptidase M16 family.

The protein resides in the periplasm. The protein is Protein YhjJ (yhjJ) of Salmonella typhi.